A 43-amino-acid polypeptide reads, in one-letter code: Protein PsbN (43 aa).

The helical transmembrane segment at 7–27 (LIIFIASLLLGLTGYSIYTAF) threads the bilayer.

It belongs to the PsbN family.

It localises to the plastid. It is found in the chloroplast thylakoid membrane. Functionally, may play a role in photosystem I and II biogenesis. The chain is Protein PsbN from Guillardia theta (Cryptophyte).